A 256-amino-acid chain; its full sequence is Hydroxyacylglutathione hydrolase (256 aa).

7 residues coordinate Zn(2+): histidine 57, histidine 59, aspartate 61, histidine 62, histidine 115, aspartate 134, and histidine 172.

It belongs to the metallo-beta-lactamase superfamily. Glyoxalase II family. As to quaternary structure, monomer. It depends on Zn(2+) as a cofactor.

It carries out the reaction an S-(2-hydroxyacyl)glutathione + H2O = a 2-hydroxy carboxylate + glutathione + H(+). It functions in the pathway secondary metabolite metabolism; methylglyoxal degradation; (R)-lactate from methylglyoxal: step 2/2. Thiolesterase that catalyzes the hydrolysis of S-D-lactoyl-glutathione to form glutathione and D-lactic acid. This Rhizobium etli (strain ATCC 51251 / DSM 11541 / JCM 21823 / NBRC 15573 / CFN 42) protein is Hydroxyacylglutathione hydrolase.